Consider the following 356-residue polypeptide: ATP-dependent 6-phosphofructokinase (356 aa).

ATP contacts are provided by residues G15, 78 to 79, and 115 to 118; these read KG and GEGT. E116 provides a ligand contact to Mg(2+). Substrate contacts are provided by residues 138–140, R175, 182–184, E235, R272, and 278–281; these read TID, MGR, and HLQR. Catalysis depends on D140, which acts as the Proton acceptor.

It belongs to the phosphofructokinase type A (PFKA) family. Mixed-substrate PFK group III subfamily. In terms of assembly, homodimer or homotetramer. It depends on Mg(2+) as a cofactor.

It localises to the cytoplasm. The catalysed reaction is beta-D-fructose 6-phosphate + ATP = beta-D-fructose 1,6-bisphosphate + ADP + H(+). Its pathway is carbohydrate degradation; glycolysis; D-glyceraldehyde 3-phosphate and glycerone phosphate from D-glucose: step 3/4. Its function is as follows. Catalyzes the phosphorylation of D-fructose 6-phosphate to fructose 1,6-bisphosphate by ATP, the first committing step of glycolysis. The protein is ATP-dependent 6-phosphofructokinase of Chloroflexus aggregans (strain MD-66 / DSM 9485).